Reading from the N-terminus, the 353-residue chain is MVNYSNCHFIRSPIHLENQKFGRRPGQLIKISPKLAQNGLVEVIGLDFLSSHYHALAAIQRLLTATNYKGNTKGVVLSRESNSFQFEGWIPRIRFTKTEFLEAYGVKRYKTSRNKYEFSGKESETALEALYHLGHQPFLIVATRTRWNNGTPILDRYQTLSPIIRIYEGWEGLTDEENTEIDVTPFNSPSTRKHKGFIVEPCPILVDQIDSYFVVKPANVYQEIKMRFPNASRYAYTFIDWIITASAKKKRKLTKENSWPENLSLNVNVKSLAYILRMNRYISTRNWKKIEMAIDKCVEIAIQLGWLSSRKRVEFLEASKLSKKEILYLNKERFEEITRKSKEQMNQFEQEFN.

The chain is Virulence plasmid protein pGP2-D from Chlamydia muridarum (strain MoPn / Nigg).